Consider the following 416-residue polypeptide: Serine hydroxymethyltransferase (416 aa).

(6S)-5,6,7,8-tetrahydrofolate contacts are provided by residues Leu-121 and 125-127 (GHL). Position 229 is an N6-(pyridoxal phosphate)lysine (Lys-229). (6S)-5,6,7,8-tetrahydrofolate contacts are provided by residues Glu-245 and 354-356 (SPF).

The protein belongs to the SHMT family. In terms of assembly, homodimer. Pyridoxal 5'-phosphate serves as cofactor.

The protein localises to the cytoplasm. It carries out the reaction (6R)-5,10-methylene-5,6,7,8-tetrahydrofolate + glycine + H2O = (6S)-5,6,7,8-tetrahydrofolate + L-serine. It participates in one-carbon metabolism; tetrahydrofolate interconversion. The protein operates within amino-acid biosynthesis; glycine biosynthesis; glycine from L-serine: step 1/1. Functionally, catalyzes the reversible interconversion of serine and glycine with tetrahydrofolate (THF) serving as the one-carbon carrier. This reaction serves as the major source of one-carbon groups required for the biosynthesis of purines, thymidylate, methionine, and other important biomolecules. Also exhibits THF-independent aldolase activity toward beta-hydroxyamino acids, producing glycine and aldehydes, via a retro-aldol mechanism. The polypeptide is Serine hydroxymethyltransferase (Aliivibrio fischeri (strain ATCC 700601 / ES114) (Vibrio fischeri)).